Here is a 195-residue protein sequence, read N- to C-terminus: COMM domain-containing protein 3 (195 aa).

The COMM domain occupies 124–193 (HITDVSWRLE…DASKSLERAT (70 aa)).

It belongs to the COMM domain-containing protein 3 family. As to quaternary structure, component of the commander complex consisting of the CCC subcomplex and the retriever subcomplex. Component of the CCC (COMMD/CCDC22/CCDC93) subcomplex consisting of COMMD1, COMMD2, COMMD3, COMMD4, COMMD5, COMMD6, COMMD7, COMMD8, COMMD9, COMMD10, CCDC22 and CCDC93; within the complex forms a heterodimer with COMMD2. Interacts with NFKB1/p105. Interacts with CCDC22, CCDC93, SCNN1B, CUL3, CUL4A, CUL4B, CUL5. Expressed in kidney collecting duct cells and in the nuclei of proximal convoluted tubule cells in the kidney cortex (at protein level).

It is found in the cytoplasm. The protein resides in the nucleus. Functionally, scaffold protein in the commander complex that is essential for endosomal recycling of transmembrane cargos; the commander complex is composed of the CCC subcomplex and the retriever subcomplex. May modulate activity of cullin-RING E3 ubiquitin ligase (CRL) complexes. May down-regulate activation of NF-kappa-B. Modulates Na(+) transport in epithelial cells by regulation of apical cell surface expression of amiloride-sensitive sodium channel (ENaC) subunits. The sequence is that of COMM domain-containing protein 3 (Commd3) from Rattus norvegicus (Rat).